Here is a 329-residue protein sequence, read N- to C-terminus: uncharacterized protein (329 aa).

Coiled-coil stretches lie at residues 57 to 119 (KKEE…LQEV) and 224 to 250 (AQRQ…LGNV).

This is an uncharacterized protein from Macaca fascicularis (Crab-eating macaque).